A 375-amino-acid polypeptide reads, in one-letter code: Succinyl-diaminopimelate desuccinylase (375 aa).

His-66 is a binding site for Zn(2+). Residue Asp-68 is part of the active site. Zn(2+) is bound at residue Asp-99. The active-site Proton acceptor is the Glu-133. Glu-134, Glu-162, and His-348 together coordinate Zn(2+).

It belongs to the peptidase M20A family. DapE subfamily. Homodimer. Zn(2+) is required as a cofactor. Requires Co(2+) as cofactor.

It catalyses the reaction N-succinyl-(2S,6S)-2,6-diaminopimelate + H2O = (2S,6S)-2,6-diaminopimelate + succinate. Its pathway is amino-acid biosynthesis; L-lysine biosynthesis via DAP pathway; LL-2,6-diaminopimelate from (S)-tetrahydrodipicolinate (succinylase route): step 3/3. Its function is as follows. Catalyzes the hydrolysis of N-succinyl-L,L-diaminopimelic acid (SDAP), forming succinate and LL-2,6-diaminopimelate (DAP), an intermediate involved in the bacterial biosynthesis of lysine and meso-diaminopimelic acid, an essential component of bacterial cell walls. This is Succinyl-diaminopimelate desuccinylase from Buchnera aphidicola subsp. Acyrthosiphon pisum (strain 5A).